A 290-amino-acid chain; its full sequence is NAD kinase (290 aa).

Aspartate 75 acts as the Proton acceptor in catalysis. Residues 75–76 (DG), 148–149 (NE), aspartate 178, 189–194 (TAYNIS), and glutamine 247 each bind NAD(+).

Belongs to the NAD kinase family. A divalent metal cation serves as cofactor.

Its subcellular location is the cytoplasm. The catalysed reaction is NAD(+) + ATP = ADP + NADP(+) + H(+). Its function is as follows. Involved in the regulation of the intracellular balance of NAD and NADP, and is a key enzyme in the biosynthesis of NADP. Catalyzes specifically the phosphorylation on 2'-hydroxyl of the adenosine moiety of NAD to yield NADP. The polypeptide is NAD kinase (Wolinella succinogenes (strain ATCC 29543 / DSM 1740 / CCUG 13145 / JCM 31913 / LMG 7466 / NCTC 11488 / FDC 602W) (Vibrio succinogenes)).